The sequence spans 317 residues: Protein lifeguard 2 (317 aa).

Residues 1–54 (MTQGKLSVANKAPGTEGQQHQANGEKKDAPAVPSAPPSYEEATSGEGLKAGTFP) are disordered. The next 3 helical transmembrane spans lie at 107–127 (VYTILLVQLLVTLAVVALFTF), 139–159 (PGWYWASYAVFFATYLTLACC), and 166–186 (FPWNLILLTIFTLSMAYLTGM). Residue Asn192 is glycosylated (N-linked (GlcNAc...) asparagine). The next 4 helical transmembrane spans lie at 195 to 215 (SVLLCLVITALVCLSVTIFSF), 226 to 246 (GVLFVLLMTLFFSGLLLAVLL), 252 to 272 (PWLHAVYAVLGAGVFTLFLAF), and 291 to 311 (IFGALNIYLDIIYIFTFFLQL).

It belongs to the BI1 family. LFG subfamily. In terms of assembly, interacts with FAS/TNFRSF6 and BAX. As to expression, brain. Highly expressed in cerebellum, also found in cortex, olfactory bulb, and hippocampus.

The protein localises to the cell membrane. It localises to the membrane raft. It is found in the postsynaptic cell membrane. Its function is as follows. Antiapoptotic protein which protects cells uniquely from Fas-induced apoptosis. Regulates Fas-mediated apoptosis in neurons by interfering with caspase-8 activation. Plays a role in cerebellar development by affecting cerebellar size, internal granular layer (IGL) thickness, and Purkinje cell (PC) development. The polypeptide is Protein lifeguard 2 (Faim2) (Mus musculus (Mouse)).